The sequence spans 112 residues: Cytochrome c-551 (112 aa).

Positions 1–20 (MKSKLSILMIGFALSVLLAA) are cleaved as a signal peptide. Cys21 carries N-palmitoyl cysteine lipidation. The S-diacylglycerol cysteine moiety is linked to residue Cys21. The span at 25 to 35 (DAKEEKTDTGS) shows a compositional bias: basic and acidic residues. The segment at 25–44 (DAKEEKTDTGSKTEATASEG) is disordered. The region spanning 39 to 112 (ATASEGEELY…VIAKWLSEKK (74 aa)) is the Cytochrome c domain. Heme c-binding residues include Cys52, Cys55, His56, and Met91.

Post-translationally, binds 1 heme c group covalently per subunit.

The protein resides in the cell membrane. Electron carrier protein. The chain is Cytochrome c-551 (cccB) from Bacillus subtilis (strain 168).